Consider the following 210-residue polypeptide: Guanylate kinase (210 aa).

Residues 5 to 184 (GLLIVFSGPS…AAERVKHIIE (180 aa)) form the Guanylate kinase-like domain. 12–19 (GPSGVGKG) is an ATP binding site.

It belongs to the guanylate kinase family.

The protein localises to the cytoplasm. The catalysed reaction is GMP + ATP = GDP + ADP. Essential for recycling GMP and indirectly, cGMP. The sequence is that of Guanylate kinase from Streptococcus mutans serotype c (strain ATCC 700610 / UA159).